The chain runs to 199 residues: 5'-deoxynucleotidase HDDC2 (199 aa).

Residue alanine 2 is modified to N-acetylalanine. Serine 5 is modified (phosphoserine). In terms of domain architecture, HD spans 41-143; the sequence is VSDHMYRMAV…VKQLDQCEMI (103 aa). Histidine 44, histidine 72, aspartate 73, glutamate 76, aspartate 81, isoleucine 82, and aspartate 138 together coordinate a divalent metal cation. Serine 199 carries the phosphoserine modification.

This sequence belongs to the HDDC2 family. As to quaternary structure, homodimer. Mn(2+) is required as a cofactor. Co(2+) serves as cofactor. It depends on Mg(2+) as a cofactor.

It carries out the reaction a 2'-deoxyribonucleoside 5'-phosphate + H2O = a 2'-deoxyribonucleoside + phosphate. Functionally, catalyzes the dephosphorylation of the nucleoside 5'-monophosphates deoxyadenosine monophosphate (dAMP), deoxycytidine monophosphate (dCMP), deoxyguanosine monophosphate (dGMP) and deoxythymidine monophosphate (dTMP). This chain is 5'-deoxynucleotidase HDDC2 (Hddc2), found in Mus musculus (Mouse).